The primary structure comprises 2566 residues: Highly reducing polyketide synthase verA (2566 aa).

One can recognise a Ketosynthase family 3 (KS3) domain in the interval 3–440 (PEPIAIIGTG…GTNAHAILES (438 aa)). Residues 35-61 (VASEPPSTRFDNRSFYDPDPSHPGTTN) form a disordered region. Over residues 44–54 (FDNRSFYDPDP) the composition is skewed to basic and acidic residues. Active-site for beta-ketoacyl synthase activity residues include Cys176, His316, and His360. The tract at residues 554-880 (IFTGQGAQWP…IGLSNRGASG (327 aa)) is malonyl-CoA:ACP transacylase (MAT) domain. Residue Ser648 is the For malonyltransferase activity of the active site. The N-terminal hotdog fold stretch occupies residues 950–1081 (HPLLGSLEAD…GKLLICWGNP (132 aa)). Residues 950–1246 (HPLLGSLEAD…EGVHISPLGP (297 aa)) are dehydratase (DH) domain. The PKS/mFAS DH domain occupies 950–1250 (HPLLGSLEAD…ISPLGPPDRQ (301 aa)). The active-site Proton acceptor; for dehydratase activity is His982. Residues 1096–1250 (AGAVDIKDFY…ISPLGPPDRQ (155 aa)) are C-terminal hotdog fold. The active-site Proton donor; for dehydratase activity is Asp1156. The interval 1386–1581 (DVLSRFYKED…TGFGGIDTIT (196 aa)) is methyltransferase (CMet) domain. Residues 2127–2294 (KTYLLVGMTG…RRARNIVGSI (168 aa)) are ketoreductase (KR) domain. Positions 2411–2489 (EAAEIVAAGL…ALTADSVSKL (79 aa)) constitute a Carrier domain. Ser2449 carries the post-translational modification O-(pantetheine 4'-phosphoryl)serine. Positions 2505–2540 (KDVSGLTSPPEVPSDASRSSVSSGMDEIVTPESPSF) are disordered. Residues 2518–2527 (SDASRSSVSS) show a composition bias toward low complexity.

Pantetheine 4'-phosphate is required as a cofactor.

It functions in the pathway secondary metabolite biosynthesis; terpenoid biosynthesis. The protein operates within mycotoxin biosynthesis. Highly reducing polyketide synthase (HR-PKS); part of the gene cluster that mediates the biosynthesis of the neurotoxin verrucosidin, a methylated alpha-pyrone polyketide that inhibits oxidative phosphorylation in mitochondria and thereby causes neurological diseases. The carbon backbone of verrucosidin is synthesized by the HR-PKS verA, and further modified by the other verrucodidin cluster enzymes. The chain is Highly reducing polyketide synthase verA from Penicillium polonicum.